A 479-amino-acid chain; its full sequence is Oxysterol-binding protein homolog C23B6.01c (479 aa).

Serine 328, serine 408, serine 409, and serine 421 each carry phosphoserine. The segment covering 404–418 has biased composition (basic and acidic residues); it reads KPEDSSIHKHSRDAS. The tract at residues 404–479 is disordered; sequence KPEDSSIHKH…KLHEEQDPAL (76 aa). A compositionally biased stretch (polar residues) spans 439–452; that stretch reads QSTASFVTYRSDNG. Basic and acidic residues predominate over residues 470 to 479; it reads KLHEEQDPAL.

The protein belongs to the OSBP family.

The protein localises to the cytoplasm. It localises to the nucleus. The chain is Oxysterol-binding protein homolog C23B6.01c from Schizosaccharomyces pombe (strain 972 / ATCC 24843) (Fission yeast).